Consider the following 212-residue polypeptide: Putative inactive 6-phospho-alpha-glucosidase (212 aa).

An NAD(+)-binding site is contributed by 4–70; that stretch reads FSVVVAGGGS…PDIAFSYTTD (67 aa). Mn(2+) is bound by residues C169 and H200.

It belongs to the glycosyl hydrolase 4 family.

The polypeptide is Putative inactive 6-phospho-alpha-glucosidase (Escherichia coli (strain K12)).